The following is a 121-amino-acid chain: Large ribosomal subunit protein uL18 (121 aa).

This sequence belongs to the universal ribosomal protein uL18 family. In terms of assembly, part of the 50S ribosomal subunit; part of the 5S rRNA/L5/L18/L25 subcomplex. Contacts the 5S and 23S rRNAs.

This is one of the proteins that bind and probably mediate the attachment of the 5S RNA into the large ribosomal subunit, where it forms part of the central protuberance. The chain is Large ribosomal subunit protein uL18 from Burkholderia ambifaria (strain MC40-6).